Consider the following 92-residue polypeptide: Small ribosomal subunit protein bS18 (92 aa).

It belongs to the bacterial ribosomal protein bS18 family. In terms of assembly, part of the 30S ribosomal subunit. Forms a tight heterodimer with protein bS6.

Binds as a heterodimer with protein bS6 to the central domain of the 16S rRNA, where it helps stabilize the platform of the 30S subunit. The polypeptide is Small ribosomal subunit protein bS18 (Ralstonia nicotianae (strain ATCC BAA-1114 / GMI1000) (Ralstonia solanacearum)).